Consider the following 293-residue polypeptide: Diaminopimelate epimerase (293 aa).

Substrate contacts are provided by asparagine 13, glutamine 46, and asparagine 66. The active-site Proton donor is cysteine 75. Residues 76-77 (GN), asparagine 162, asparagine 195, and 213-214 (ER) contribute to the substrate site. Cysteine 222 serves as the catalytic Proton acceptor. 223–224 (GT) contacts substrate.

It belongs to the diaminopimelate epimerase family. As to quaternary structure, homodimer.

The protein resides in the cytoplasm. It catalyses the reaction (2S,6S)-2,6-diaminopimelate = meso-2,6-diaminopimelate. It participates in amino-acid biosynthesis; L-lysine biosynthesis via DAP pathway; DL-2,6-diaminopimelate from LL-2,6-diaminopimelate: step 1/1. In terms of biological role, catalyzes the stereoinversion of LL-2,6-diaminopimelate (L,L-DAP) to meso-diaminopimelate (meso-DAP), a precursor of L-lysine and an essential component of the bacterial peptidoglycan. The protein is Diaminopimelate epimerase of Psychrobacter sp. (strain PRwf-1).